A 216-amino-acid chain; its full sequence is MATGSQTSWLLTFTLLCLPWPQEAGAFPAMPLSNLFANAVLRAQHLHQLAADTYKEFERAYIPEGQRYSIQNAQAAFCFSETIPAPTGKEEAQQRSDMELLRFSLLLIQSWLGPVQFLSRVFTNSLVFGTSDRVFEKLKDLEEGIQALMRELEDGSLRAGQLLKQTYDKFDTNMRSDDALLKNYGLLSCFKKDLHKAETYLRVMKCRRFVESSCAF.

The first 26 residues, 1–26 (MATGSQTSWLLTFTLLCLPWPQEAGA), serve as a signal peptide directing secretion. Residue histidine 45 coordinates Zn(2+). A disulfide bond links cysteine 78 and cysteine 189. Phosphoserine is present on serine 131. Glutamate 198 contributes to the Zn(2+) binding site. Cysteines 206 and 214 form a disulfide.

This sequence belongs to the somatotropin/prolactin family.

It is found in the secreted. Its function is as follows. Plays an important role in growth control. Its major role in stimulating body growth is to stimulate the liver and other tissues to secrete IGF1. It stimulates both the differentiation and proliferation of myoblasts. It also stimulates amino acid uptake and protein synthesis in muscle and other tissues. The protein is Somatotropin (GH1) of Spalax ehrenbergi (Middle East blind mole rat).